The chain runs to 352 residues: Glycerol-1-phosphate dehydrogenase [NAD(P)+] (352 aa).

NAD(+) is bound by residues 98–102 (GKPID) and 120–123 (TAAS). Asp-125 contacts substrate. Ser-129 is an NAD(+) binding site. Asp-172 serves as a coordination point for substrate. Residues Asp-172 and His-252 each contribute to the Zn(2+) site. His-256 serves as a coordination point for substrate. His-268 is a binding site for Zn(2+).

This sequence belongs to the glycerol-1-phosphate dehydrogenase family. The cofactor is Zn(2+).

The protein localises to the cytoplasm. The enzyme catalyses sn-glycerol 1-phosphate + NAD(+) = dihydroxyacetone phosphate + NADH + H(+). It carries out the reaction sn-glycerol 1-phosphate + NADP(+) = dihydroxyacetone phosphate + NADPH + H(+). It functions in the pathway membrane lipid metabolism; glycerophospholipid metabolism. Catalyzes the NAD(P)H-dependent reduction of dihydroxyacetonephosphate (DHAP or glycerone phosphate) to glycerol 1-phosphate (G1P). The G1P thus generated is used as the glycerophosphate backbone of phospholipids in the cellular membranes of Archaea. This is Glycerol-1-phosphate dehydrogenase [NAD(P)+] from Natronomonas pharaonis (strain ATCC 35678 / DSM 2160 / CIP 103997 / JCM 8858 / NBRC 14720 / NCIMB 2260 / Gabara) (Halobacterium pharaonis).